The sequence spans 131 residues: Global transcriptional regulator Spx (131 aa).

Cys10 and Cys13 form a disulfide bridge.

It belongs to the ArsC family. Spx subfamily. As to quaternary structure, interacts with the C-terminal domain of the alpha subunit of the RNAP.

The protein localises to the cytoplasm. With respect to regulation, under non-stress conditions, Spx is degraded by ClpXP. Efficient degradation by ClpXP requires the adapter protein SpxH/YjbH. Function, levels and solubility of Spx are affected by SpxH/YjbH aggregation and stress conditions. Global transcriptional regulator that plays a key role in stress response and exerts either positive or negative regulation of genes. Acts by interacting with the C-terminal domain of the alpha subunit of the RNA polymerase (RNAP). This interaction can enhance binding of RNAP to the promoter region of target genes and stimulate their transcription, or block interaction of RNAP with activator proteins and repress transcription. Its function is as follows. Required for transcription of thioredoxin reductase (trxB). Modulates the expression of icaR, encoding a repressor of the biofilm operon icaADBC. Also controls the transcription of trfA, a gene implicated in cell wall antibiotic resistance, which in turn is required for degradation of MazE antitoxin, the unstable component of the MazEF toxin-antitoxin system, that neutralizes the endoribonuclease activity of MazF toxin. The chain is Global transcriptional regulator Spx from Staphylococcus aureus (strain NCTC 8325 / PS 47).